The sequence spans 498 residues: Cytochrome P450 monooxygenase idtP (498 aa).

The first 20 residues, Met-1 to Ser-20, serve as a signal peptide directing secretion. Position 439 (Cys-439) interacts with heme.

Belongs to the cytochrome P450 family. Heme serves as cofactor.

It participates in secondary metabolite biosynthesis. Cytochrome P450 monooxygenase; part of the gene cluster that mediates the biosynthesis of paspalitrems, indole-diterpene (IDT) mycotoxins that are potent tremorgens in mammals. The geranylgeranyl diphosphate (GGPP) synthase idtG is proposed to catalyze the first step in IDT biosynthesis via catalysis of a series of iterative condensations of isopentenyl diphosphate (IPP) with dimethylallyl diphosphate (DMAPP), geranyl diphosphate (GPP), and farnesyl diphosphate (FPP), to form GGPP. Condensation of indole-3-glycerol phosphate with GGPP by the prenyltransferase idtC then forms 3-geranylgeranylindole (3-GGI). Epoxidation of the two terminal alkenes of the geranylgeranyl moiety by the FAD-dependent monooxygenase idtM, and cyclization by the terpene cyclase idtB then leads to the production of paspaline. The cytochrome P450 monooxygenase idtP then catalyzes oxidative elimination of the pendant methyl group at C-12 of paspaline and generates the C-10 ketone to yield 13-desoxypaxilline. The cytochrome P450 monooxygenase idtQ may catalyze the C-13 oxidation of 13-desoxypaxilline to afford paxilline. Considering that both paspalicine and paxilline were detected in C.paspali, idtQ also catalyzes the formation of paspalinine from 13-desoxypaxilline via paspalicine as an intermediate. Finally, the alpha-prenyltransferase idtF prenylates paspalinine at the C-20 or the C-21 positions to yield paspalitrems A and C, respectively. The hydroxylation of paspalitrem A at C-32 by a still unknown oxidase affords paspalitrem B. The polypeptide is Cytochrome P450 monooxygenase idtP (Claviceps paspali (Rye ergot fungus)).